The sequence spans 573 residues: Membrane protein insertase YidC (573 aa).

Helical transmembrane passes span 6–26 (VFLIFAWLMVAALLWMEWGKD), 355–375 (FSIMAIIGQGLFWVLSHLHSF), 379–399 (WGWAIIGLVVLLRLALYPLSA), 446–466 (GGCLPLLIQMPIFFALYWVLV), 488–508 (PYFILPVLNIAIMWATQKLTP), and 524–544 (PLVFGVMMAFMPAGLVLYWVV).

This sequence belongs to the OXA1/ALB3/YidC family. Type 1 subfamily. Interacts with the Sec translocase complex via SecD. Specifically interacts with transmembrane segments of nascent integral membrane proteins during membrane integration.

It localises to the cell inner membrane. Required for the insertion and/or proper folding and/or complex formation of integral membrane proteins into the membrane. Involved in integration of membrane proteins that insert both dependently and independently of the Sec translocase complex, as well as at least some lipoproteins. Aids folding of multispanning membrane proteins. The protein is Membrane protein insertase YidC of Xanthomonas campestris pv. campestris (strain ATCC 33913 / DSM 3586 / NCPPB 528 / LMG 568 / P 25).